The chain runs to 229 residues: MAKKGKNYLEAAKQVDATKAYTVEEAIDLVKKVDFAKFDASLEVAYRLNVDPKQADQQIRGAVVLPNGTGKTQRVIVFAQGEQAKQAEAAGADVVGAEDLVEKIQGGWLDFDVAVATPPMMAQVGRLGRVLGPKGLMPNPKTGTVTMDVTKAVNDIKAGQVAYRVDKAGIVHAPIGKVSFDAAKLVENFKAMQDVIIKARPASAKGQYITSLSVSSTFGPGVKVDVASF.

The protein belongs to the universal ribosomal protein uL1 family. Part of the 50S ribosomal subunit.

In terms of biological role, binds directly to 23S rRNA. The L1 stalk is quite mobile in the ribosome, and is involved in E site tRNA release. Its function is as follows. Protein L1 is also a translational repressor protein, it controls the translation of the L11 operon by binding to its mRNA. This chain is Large ribosomal subunit protein uL1, found in Latilactobacillus sakei subsp. sakei (strain 23K) (Lactobacillus sakei subsp. sakei).